Reading from the N-terminus, the 303-residue chain is Flavin-dependent thymidylate synthase (303 aa).

Positions 1-21 (MALTSEQRAEIEAQRSEPQLT) are disordered. The region spanning 43-256 (GFLRVVDYMG…PATAAAFEEY (214 aa)) is the ThyX domain. FAD is bound by residues Thr-89, 112–114 (RHR), and Glu-120. Residues 109–112 (QWIR), 120–124 (EYSAR), and Arg-195 each bind dUMP. Positions 112-122 (RHRMASVNEYS) match the ThyX motif motif. Residues 211-213 (DLH) and His-217 contribute to the FAD site. Residue Arg-222 participates in dUMP binding. Arg-222 functions as the Involved in ionization of N3 of dUMP, leading to its activation in the catalytic mechanism.

The protein belongs to the thymidylate synthase ThyX family. Homotetramer. It depends on FAD as a cofactor.

The enzyme catalyses dUMP + (6R)-5,10-methylene-5,6,7,8-tetrahydrofolate + NADPH + H(+) = dTMP + (6S)-5,6,7,8-tetrahydrofolate + NADP(+). Its pathway is pyrimidine metabolism; dTTP biosynthesis. In terms of biological role, catalyzes the reductive methylation of 2'-deoxyuridine-5'-monophosphate (dUMP) to 2'-deoxythymidine-5'-monophosphate (dTMP) while utilizing 5,10-methylenetetrahydrofolate (mTHF) as the methyl donor, and NADPH and FADH(2) as the reductant. The protein is Flavin-dependent thymidylate synthase of Gluconobacter oxydans (strain 621H) (Gluconobacter suboxydans).